The chain runs to 382 residues: Queuine tRNA-ribosyltransferase (382 aa).

The Proton acceptor role is filled by Asp-93. Substrate contacts are provided by residues 93 to 97 (DSGGF), Asp-147, Gln-191, and Gly-218. Residues 249–255 (GVGKPED) form an RNA binding region. Residue Asp-268 is the Nucleophile of the active site. Positions 273 to 277 (TRNAR) are RNA binding; important for wobble base 34 recognition. Residues Cys-306, Cys-308, Cys-311, and His-337 each coordinate Zn(2+).

It belongs to the queuine tRNA-ribosyltransferase family. Homodimer. Within each dimer, one monomer is responsible for RNA recognition and catalysis, while the other monomer binds to the replacement base PreQ1. Zn(2+) serves as cofactor.

It catalyses the reaction 7-aminomethyl-7-carbaguanine + guanosine(34) in tRNA = 7-aminomethyl-7-carbaguanosine(34) in tRNA + guanine. The protein operates within tRNA modification; tRNA-queuosine biosynthesis. Catalyzes the base-exchange of a guanine (G) residue with the queuine precursor 7-aminomethyl-7-deazaguanine (PreQ1) at position 34 (anticodon wobble position) in tRNAs with GU(N) anticodons (tRNA-Asp, -Asn, -His and -Tyr). Catalysis occurs through a double-displacement mechanism. The nucleophile active site attacks the C1' of nucleotide 34 to detach the guanine base from the RNA, forming a covalent enzyme-RNA intermediate. The proton acceptor active site deprotonates the incoming PreQ1, allowing a nucleophilic attack on the C1' of the ribose to form the product. After dissociation, two additional enzymatic reactions on the tRNA convert PreQ1 to queuine (Q), resulting in the hypermodified nucleoside queuosine (7-(((4,5-cis-dihydroxy-2-cyclopenten-1-yl)amino)methyl)-7-deazaguanosine). The polypeptide is Queuine tRNA-ribosyltransferase (Haemophilus influenzae (strain ATCC 51907 / DSM 11121 / KW20 / Rd)).